A 66-amino-acid chain; its full sequence is Large ribosomal subunit protein uL29 (66 aa).

The protein belongs to the universal ribosomal protein uL29 family.

This chain is Large ribosomal subunit protein uL29, found in Francisella philomiragia subsp. philomiragia (strain ATCC 25017 / CCUG 19701 / FSC 153 / O#319-036).